Consider the following 431-residue polypeptide: Glutamate-1-semialdehyde 2,1-aminomutase (431 aa).

K269 bears the N6-(pyridoxal phosphate)lysine mark.

It belongs to the class-III pyridoxal-phosphate-dependent aminotransferase family. HemL subfamily. As to quaternary structure, homodimer. It depends on pyridoxal 5'-phosphate as a cofactor.

The protein localises to the cytoplasm. It catalyses the reaction (S)-4-amino-5-oxopentanoate = 5-aminolevulinate. It participates in porphyrin-containing compound metabolism; protoporphyrin-IX biosynthesis; 5-aminolevulinate from L-glutamyl-tRNA(Glu): step 2/2. The protein operates within porphyrin-containing compound metabolism; chlorophyll biosynthesis. This chain is Glutamate-1-semialdehyde 2,1-aminomutase, found in Chlorobium chlorochromatii (strain CaD3).